Consider the following 217-residue polypeptide: Large ribosomal subunit protein uL16 (217 aa).

This sequence belongs to the universal ribosomal protein uL16 family. In terms of assembly, component of the small ribosomal subunit. Mature ribosomes consist of a small (40S) and a large (60S) subunit. The 40S subunit contains about 33 different proteins and 1 molecule of RNA (18S). The 60S subunit contains about 49 different proteins and 3 molecules of RNA (25S, 5.8S and 5S).

This is Large ribosomal subunit protein uL16 (rpl10) from Dictyostelium discoideum (Social amoeba).